Here is a 287-residue protein sequence, read N- to C-terminus: DDRGK domain-containing protein 1 (287 aa).

Over 1 to 5 (MDLIL) the chain is Lumenal. A helical membrane pass occupies residues 6–26 (LLGIAVALLVILVTLFFFTKG). The Cytoplasmic segment spans residues 27-287 (KGSQESGKYN…LINLVPVSAE (261 aa)). Disordered stretches follow at residues 28 to 102 (GSQE…KRAK) and 135 to 164 (KVEA…RQEH). Low complexity predominate over residues 44–68 (AQAAPRRAQVVRNQRNRARVAAAPA). A compositionally biased stretch (basic and acidic residues) spans 85–102 (IPHADFNGEKMGAKKRAK).

The protein belongs to the DDRGK1 family. As to quaternary structure, interacts with Atg9; the interaction is transient.

It localises to the endoplasmic reticulum membrane. Substrate adapter for ufmylation, the covalent attachment of the ubiquitin-like modifier UFM1 to substrate proteins. Required for ufmylation of Atg9; protects the nervous system during aging, possibly by stabilizing Atg9 and supporting its function. This Culex quinquefasciatus (Southern house mosquito) protein is DDRGK domain-containing protein 1.